A 132-amino-acid polypeptide reads, in one-letter code: D-ribose pyranase (132 aa).

Catalysis depends on H20, which acts as the Proton donor. Substrate is bound by residues D28, H99, and 121 to 123 (YSN).

This sequence belongs to the RbsD / FucU family. RbsD subfamily. As to quaternary structure, homodecamer.

The protein resides in the cytoplasm. The enzyme catalyses beta-D-ribopyranose = beta-D-ribofuranose. The protein operates within carbohydrate metabolism; D-ribose degradation; D-ribose 5-phosphate from beta-D-ribopyranose: step 1/2. Functionally, catalyzes the interconversion of beta-pyran and beta-furan forms of D-ribose. This Streptococcus agalactiae serotype V (strain ATCC BAA-611 / 2603 V/R) protein is D-ribose pyranase.